A 666-amino-acid polypeptide reads, in one-letter code: Amyloid beta A4 precursor protein-binding family B member 1-interacting protein (666 aa).

Ser-55 is modified (phosphoserine). The disordered stretch occupies residues 122-155 (SQYEDDLPPPPADPVLDLPLPPPPPEPLSQEEEE). Residues 129 to 148 (PPPPADPVLDLPLPPPPPEP) are compositionally biased toward pro residues. In terms of domain architecture, Ras-associating spans 176–263 (KKLVVKVHMN…KILFLEKEEK (88 aa)). Positions 310–419 (VPELEGALYL…WVMGIRIAKY (110 aa)) constitute a PH domain. The disordered stretch occupies residues 448 to 666 (AAAPAQPSTG…ALQKKRGNVS (219 aa)). Polar residues predominate over residues 453–478 (QPSTGPKTGTTQPNGQIPQATHSVSA). The segment covering 483-504 (AQRHAETSKDKKPALGNHHDPA) has biased composition (basic and acidic residues). A Phosphoserine modification is found at Ser-526. The residue at position 528 (Thr-528) is a Phosphothreonine. Ser-531 bears the Phosphoserine mark. Pro residues-rich tracts occupy residues 547 to 589 (PAPP…PPPS) and 598 to 631 (LPPP…PVPP).

This sequence belongs to the MRL family. In terms of assembly, interacts, through the N-terminal Pro-rich region, with the WW domain of APBB1. Interacts with RAP1A, PFN1, TLN1, VASP, VCL and ENAH. In terms of tissue distribution, widely expressed with high expression in thymus, spleen, lymph node, bone marrow and peripheral leukocytes.

The protein localises to the cell membrane. Its subcellular location is the cell projection. It localises to the lamellipodium. It is found in the cell junction. The protein resides in the focal adhesion. The protein localises to the cytoplasm. Its subcellular location is the cytoskeleton. Its function is as follows. Appears to function in the signal transduction from Ras activation to actin cytoskeletal remodeling. Suppresses insulin-induced promoter activities through AP1 and SRE. Mediates Rap1-induced adhesion. This chain is Amyloid beta A4 precursor protein-binding family B member 1-interacting protein (APBB1IP), found in Homo sapiens (Human).